The following is a 305-amino-acid chain: HTH-type transcriptional activator BauR (305 aa).

The region spanning 15–72 (FDIRLLRIFKTIVECGSFSAAESTLGLSRSAISLHMGDLEKRLGMRLCQRGRAGFALT) is the HTH lysR-type domain.

It belongs to the LysR transcriptional regulatory family.

Functionally, involved in the degradation of beta-alanine. BauR activates the transcription of the bauABCD operon. The chain is HTH-type transcriptional activator BauR (bauR) from Pseudomonas aeruginosa (strain ATCC 15692 / DSM 22644 / CIP 104116 / JCM 14847 / LMG 12228 / 1C / PRS 101 / PAO1).